The sequence spans 83 residues: EVPADAVTESDPTAVALKYHRNAAESERVAAARPGLPPEEQHCENCQFMLPDQGADEWRGCSLFPGKLINLNGWCASWTLRAG.

[4Fe-4S] cluster is bound by residues cysteine 43, cysteine 46, cysteine 61, and cysteine 75.

It belongs to the high-potential iron-sulfur protein (HiPIP) family. Homodimer.

It is found in the periplasm. In terms of biological role, specific class of high-redox-potential 4Fe-4S ferredoxins. Functions in anaerobic electron transport in most purple and in some other photosynthetic bacteria and in at least one genus (Paracoccus) of halophilic, denitrifying bacteria. This is High-potential iron-sulfur protein from Isochromatium buderi (Chromatium buderi).